The following is a 735-amino-acid chain: 5-methyltetrahydropteroyltriglutamate--homocysteine methyltransferase (735 aa).

5-methyltetrahydropteroyltri-L-glutamate-binding positions include 15 to 18 (REFK) and Lys104. Residues 409 to 411 (IGS) and Glu462 contribute to the L-homocysteine site. Residues 409–411 (IGS) and Glu462 each bind L-methionine. 5-methyltetrahydropteroyltri-L-glutamate-binding positions include 493–494 (RC) and Trp539. Residue Asp577 participates in L-homocysteine binding. Asp577 contacts L-methionine. A 5-methyltetrahydropteroyltri-L-glutamate-binding site is contributed by Glu583. Zn(2+)-binding residues include His618, Cys620, and Glu642. His672 (proton donor) is an active-site residue. Residue Cys704 coordinates Zn(2+).

The protein belongs to the vitamin-B12 independent methionine synthase family. It depends on Zn(2+) as a cofactor.

It carries out the reaction 5-methyltetrahydropteroyltri-L-glutamate + L-homocysteine = tetrahydropteroyltri-L-glutamate + L-methionine. It functions in the pathway amino-acid biosynthesis; L-methionine biosynthesis via de novo pathway; L-methionine from L-homocysteine (MetE route): step 1/1. Functionally, catalyzes the transfer of a methyl group from 5-methyltetrahydrofolate to homocysteine resulting in methionine formation. The polypeptide is 5-methyltetrahydropteroyltriglutamate--homocysteine methyltransferase (Thermotoga petrophila (strain ATCC BAA-488 / DSM 13995 / JCM 10881 / RKU-1)).